The chain runs to 504 residues: Fibroblast growth factor receptor-like 1 (504 aa).

The first 24 residues, 1–24 (MTPSPLLLLLLPPLLLGAFPPAAA), serve as a signal peptide directing secretion. At 25–378 (ARGPPKMADK…SSSATSLPWP (354 aa)) the chain is on the extracellular side. The Ig-like C2-type 1 domain occupies 29-115 (PKMADKVVPR…GSLSVNYTLV (87 aa)). Residues Cys-51 and Cys-99 are joined by a disulfide bond. N-linked (GlcNAc...) asparagine glycosylation occurs at Asn-111. The disordered stretch occupies residues 123 to 155 (GKESLGPDSSSGGQEDPASQQWARPRFTQPSKM). Positions 129 to 144 (PDSSSGGQEDPASQQW) are enriched in polar residues. 2 Ig-like C2-type domains span residues 147 to 237 (PRFT…YKVD) and 246 to 354 (PVLT…AFLT). A disulfide bridge connects residues Cys-172 and Cys-221. N-linked (GlcNAc...) asparagine glycans are attached at residues Asn-231, Asn-255, and Asn-293. Cys-268 and Cys-338 are joined by a disulfide. A helical membrane pass occupies residues 379–399 (VVIGIPAGAVFILGTLLLWLC). Residues 400–504 (QAQKKPCTPA…KVHQHIHYQC (105 aa)) lie on the Cytoplasmic side of the membrane. A compositionally biased stretch (pro residues) spans 407–418 (TPAPAPPLPGHR). The segment at 407 to 435 (TPAPAPPLPGHRPPGTARDRSGDKDLPSL) is disordered. Basic and acidic residues predominate over residues 423–432 (ARDRSGDKDL).

In terms of assembly, interacts with FGF2 with a low affinity. As to expression, expressed preferentially in cartilaginous tissues and pancreas. Highly expressed in the liver, kidney, heart, brain and skeletal muscle. Weakly expressed in the lung, small intestine and spleen.

It is found in the membrane. Has a negative effect on cell proliferation. In Homo sapiens (Human), this protein is Fibroblast growth factor receptor-like 1 (FGFRL1).